Here is a 457-residue protein sequence, read N- to C-terminus: tRNA modification GTPase MnmE (457 aa).

(6S)-5-formyl-5,6,7,8-tetrahydrofolate is bound by residues arginine 22, glutamate 86, and arginine 125. Residues 221–381 (GLRAVLAGRP…LEAEVARVAG (161 aa)) form the TrmE-type G domain. Asparagine 231 is a binding site for K(+). Residues 231–236 (NVGKSS), 250–256 (TPIPGTT), and 275–278 (DTAG) each bind GTP. Mg(2+) is bound at residue serine 235. K(+) is bound by residues threonine 250, isoleucine 252, and threonine 255. Threonine 256 provides a ligand contact to Mg(2+). Residue lysine 457 coordinates (6S)-5-formyl-5,6,7,8-tetrahydrofolate.

It belongs to the TRAFAC class TrmE-Era-EngA-EngB-Septin-like GTPase superfamily. TrmE GTPase family. In terms of assembly, homodimer. Heterotetramer of two MnmE and two MnmG subunits. The cofactor is K(+).

The protein resides in the cytoplasm. In terms of biological role, exhibits a very high intrinsic GTPase hydrolysis rate. Involved in the addition of a carboxymethylaminomethyl (cmnm) group at the wobble position (U34) of certain tRNAs, forming tRNA-cmnm(5)s(2)U34. The chain is tRNA modification GTPase MnmE from Symbiobacterium thermophilum (strain DSM 24528 / JCM 14929 / IAM 14863 / T).